We begin with the raw amino-acid sequence, 236 residues long: MGVEGCTKCIKYLLFVFNFVFWLAGGVILGVALWLRHDPQTTNLLYLELGDKPAPNTFYVGIYILIAVGAVMMFVGFLGCYGAIQESQCLLGTFFTCLVILFACEVAAGIWGFVNKDQIAKDVKQFYDQALQQAVVDDDANNAKAVVKTFHETLNCCGSSTLSALTTSMLKNNLCPSGSSIISNLFKEDCHQKIDELFSGKLYLIGIAAIVVAVIMIFEMILSMVLCCGIRNSSVY.

Residues 1–12 (MGVEGCTKCIKY) are Cytoplasmic-facing. The helical transmembrane segment at 13 to 33 (LLFVFNFVFWLAGGVILGVAL) threads the bilayer. Topologically, residues 34–63 (WLRHDPQTTNLLYLELGDKPAPNTFYVGIY) are extracellular. Residues 64–84 (ILIAVGAVMMFVGFLGCYGAI) form a helical membrane-spanning segment. The Cytoplasmic portion of the chain corresponds to 85-89 (QESQC). Residues 90 to 112 (LLGTFFTCLVILFACEVAAGIWG) traverse the membrane as a helical segment. Over 113–201 (FVNKDQIAKD…QKIDELFSGK (89 aa)) the chain is Extracellular. 2 cysteine pairs are disulfide-bonded: C156–C190 and C157–C175. Residues 202 to 224 (LYLIGIAAIVVAVIMIFEMILSM) form a helical membrane-spanning segment. E219 is a cholesterol binding site. Over 225–236 (VLCCGIRNSSVY) the chain is Cytoplasmic.

It belongs to the tetraspanin (TM4SF) family. As to quaternary structure, homodimer. Part of a complex composed of CD19, CR2/CD21, CD81 and IFITM1/CD225 in the membrane of mature B cells. Interacts (via the second extracellular domain) with CD19; this interaction is initiated early during biosynthesis in the ER and enables trafficking of only properly folded CD19. Part of a complex that includes MHC class II/HLA-DR molecules and IFITM1. Interacts with IFITM1. Interacts with IFITM2 and IFITM3. Part of integrin-tetraspanin complex composed of CD9, CD81, beta-1 and beta-2 integrins in the membrane of monocyte/macrophages. Interacts (via the second extracellular domain) with integrin ITGAV:ITGB3. Interacts with CD247/CD3 zeta, ICAM1 and CD9 at the immune synapse on T cell membrane. Part of a GPCR-tetraspanin complex consisting at least of ADGRG1, CD81, possibly CD9, and GNA11 in which CD81 enhances the association of ADGRG1 with GNA11. Part of a complex composed of CD9, CD81, PTGFRN and IGSF8. Interacts directly with IGSF8. Interacts with CD53 and SCIMP. Interacts with SAMHD1 (via its C-terminus). Interacts with glypican GPC3 and with the transcriptional repressor HHEX; binding to GPC3 decreases the availability of free CD81 for binding to HHEX, resulting in nuclear translocation of HHEX and transcriptional repression. Interacts with CLDN1. Interacts with CLDN6 and CLDN9. In terms of processing, not glycosylated. Likely constitutively palmitoylated at low levels. Protein palmitoylation is up-regulated upon coligation of BCR and CD9-C2R-CD81 complexes in lipid rafts.

It is found in the cell membrane. Its subcellular location is the basolateral cell membrane. Its function is as follows. Structural component of specialized membrane microdomains known as tetraspanin-enriched microdomains (TERMs), which act as platforms for receptor clustering and signaling. Essential for trafficking and compartmentalization of CD19 receptor on the surface of activated B cells. Upon initial encounter with microbial pathogens, enables the assembly of CD19-CR2/CD21 and B cell receptor (BCR) complexes at signaling TERMs, lowering the threshold dose of antigen required to trigger B cell clonal expansion and antibody production. In T cells, facilitates the localization of CD247/CD3 zeta at antigen-induced synapses with B cells, providing for costimulation and polarization toward T helper type 2 phenotype. Present in MHC class II compartments, may also play a role in antigen presentation. Can act both as positive and negative regulator of homotypic or heterotypic cell-cell fusion processes. Positively regulates sperm-egg fusion and may be involved in acrosome reaction. In myoblasts, associates with CD9 and PTGFRN and inhibits myotube fusion during muscle regeneration. In macrophages, associates with CD9 and beta-1 and beta-2 integrins, and prevents macrophage fusion into multinucleated giant cells specialized in ingesting complement-opsonized large particles. Also prevents the fusion of mononuclear cell progenitors into osteoclasts in charge of bone resorption. May regulate the compartmentalization of enzymatic activities. In T cells, defines the subcellular localization of dNTPase SAMHD1 and permits its degradation by the proteasome, thereby controlling intracellular dNTP levels. Also involved in cell adhesion and motility. Positively regulates integrin-mediated adhesion of macrophages, particularly relevant for the inflammatory response in the lung. This Saguinus oedipus (Cotton-top tamarin) protein is CD81 protein (CD81).